The chain runs to 407 residues: Putative replication protein A (407 aa).

Belongs to the ParA family.

The polypeptide is Putative replication protein A (Sinorhizobium fredii (strain NBRC 101917 / NGR234)).